The sequence spans 503 residues: Maturase K (503 aa).

Belongs to the intron maturase 2 family. MatK subfamily.

Its subcellular location is the plastid. The protein localises to the chloroplast. Its function is as follows. Usually encoded in the trnK tRNA gene intron. Probably assists in splicing its own and other chloroplast group II introns. In Rosa foetida (Austrian briar), this protein is Maturase K.